A 519-amino-acid chain; its full sequence is MSISSDEVNFLVYRYLQESGFSHSAFTFGIESHISQSNINGALAPPAALISIIQKGLQYVEAEVSINEDGTLFDGRPIESLSLIDAVMPDVVQTRQQAYRDKLAQQQTAAAAAAAAAAAATPNNQQPPAKNGENTANGEENGGHALANNHTDMMEVDGDVEIPSSKAVVLRGHESEVFICAWNPVSDLLASGSGDSTARIWNLSENSTSGSTQLVLRHCIREGGQDVPSNKDVTSLDWNSEGTLLATGSYDGFARIWTKDGNLASTLGQHKGPIFALKWNKKGNFILSAGVDKTTIIWDAHTGEAKQQFPFHSAPALDVDWQSNNTFASCSTDMCIHVCKLGQDRPIKTFQGHTNEVNAIKWDPTGNLLASCSDDMTLKIWSMKHDTCVHDLQAHNKEIYTIKWSPTGPGTNNPNANLMLASASFDSTVRLWDVDRGICIHTLTKHQEPVYSVAFSPDGRYLASGSFDKCVHIWNTQTGALVHSYRGTGGIFEVCWNAAGDKVGASASDGSVCVLDLRK.

Residues 4-36 form the LisH domain; the sequence is SSDEVNFLVYRYLQESGFSHSAFTFGIESHISQ. In terms of domain architecture, F-box-like spans 41-86; it reads GALAPPAALISIIQKGLQYVEAEVSINEDGTLFDGRPIESLSLIDA. Positions 115–139 are enriched in low complexity; it reads AAAAAATPNNQQPPAKNGENTANGE. Residues 115-147 are disordered; it reads AAAAAATPNNQQPPAKNGENTANGEENGGHALA. 8 WD repeats span residues 172-211, 228-267, 269-308, 311-349, 352-391, 394-442, 445-484, and 486-519; these read GHES…TSGS, PSNK…ASTL, QHKG…AKQQ, FHSA…PIKT, GHTN…CVHD, AHNK…CIHT, KHQE…LVHS, and RGTG…DLRK.

This sequence belongs to the WD repeat EBI family. In terms of assembly, interacts with heterodimers of rxra and thrb, and this interaction is abrogated by thyroid hormone binding to thrb. Interacts with ncor1.

It is found in the nucleus. F-box-like protein which acts as an integral component of the N-CoR transcriptional corepressor complex. Probably regulates transcription activation mediated by nuclear receptors. May mediate the recruitment of the 19S proteasome complex, leading to the subsequent proteasomal degradation of the N-CoR complex, thereby allowing cofactor exchange and transcription activation. The protein is F-box-like/WD repeat-containing protein TBL1XR1-A (tbl1xr1-a) of Xenopus laevis (African clawed frog).